The following is a 246-amino-acid chain: LexA repressor (246 aa).

The segment at Met1–Arg34 is disordered. Positions Met52–Lys72 form a DNA-binding region, H-T-H motif. Residues Ser170 and Lys207 each act as for autocatalytic cleavage activity in the active site.

It belongs to the peptidase S24 family. As to quaternary structure, homodimer.

The catalysed reaction is Hydrolysis of Ala-|-Gly bond in repressor LexA.. Its function is as follows. Represses a number of genes involved in the response to DNA damage (SOS response), including recA and lexA. In the presence of single-stranded DNA, RecA interacts with LexA causing an autocatalytic cleavage which disrupts the DNA-binding part of LexA, leading to derepression of the SOS regulon and eventually DNA repair. The protein is LexA repressor of Nocardioides sp. (strain ATCC BAA-499 / JS614).